We begin with the raw amino-acid sequence, 922 residues long: 1,4-alpha-glucan-branching enzyme 1, chloroplastic/amyloplastic (922 aa).

The transit peptide at 1-47 (MVYTISGIRFPVLPSLHKSTLRCDRRASSHSFFLKNNSSSFSRTSLY) directs the protein to the chloroplast. The tract at residues 83 to 130 (LENPDITSEDAQNLEDLTMKDGNKYNIDESTSSYREVGDEKGSVTSSS) is disordered. The span at 99-109 (LTMKDGNKYNI) shows a compositional bias: basic and acidic residues. Asp494 (nucleophile) is an active-site residue. Glu549 serves as the catalytic Proton donor. Residues 870 to 922 (VESEPIELSVEEAESEPIERSVEEVESETTQQSVEVESETTQQSVEVESETTQ) form a disordered region. Low complexity predominate over residues 897–922 (ETTQQSVEVESETTQQSVEVESETTQ).

Belongs to the glycosyl hydrolase 13 family. GlgB subfamily. In terms of assembly, monomer. As to expression, expressed in roots, leaves, stipules, pods and flowers.

It localises to the plastid. The protein localises to the chloroplast. It is found in the amyloplast. The catalysed reaction is Transfers a segment of a (1-&gt;4)-alpha-D-glucan chain to a primary hydroxy group in a similar glucan chain.. Its pathway is glycan biosynthesis; starch biosynthesis. Functionally, catalyzes the formation of the alpha-1,6-glucosidic linkages in starch by scission of a 1,4-alpha-linked oligosaccharide from growing alpha-1,4-glucan chains and the subsequent attachment of the oligosaccharide to the alpha-1,6 position. May preferentially transfer short chains during branching. Responsible for the synthesis of about 75% of the amylopectin found in the starch granules of mature embryos. This Pisum sativum (Garden pea) protein is 1,4-alpha-glucan-branching enzyme 1, chloroplastic/amyloplastic (SBEI).